A 622-amino-acid chain; its full sequence is Pheromone-regulated protein PRM7 (622 aa).

Disordered regions lie at residues 1–35 (MYRT…SAVT), 47–200 (STSV…TISA), and 374–405 (LTPV…SKTQ). Residues 14 to 35 (TDPTSSSDVATSADPTSSSAVT) show a composition bias toward polar residues. 2 stretches are compositionally biased toward low complexity: residues 47–199 (STSV…VTIS) and 379–389 (SASSSRSSATS). Residues 396-405 (PVSSNDSKTQ) are compositionally biased toward polar residues.

The chain is Pheromone-regulated protein PRM7 (PRM7) from Saccharomyces cerevisiae (strain YJM789) (Baker's yeast).